We begin with the raw amino-acid sequence, 105 residues long: Meiotically up-regulated gene 52 protein (105 aa).

Functionally, has a role in meiosis. In Schizosaccharomyces pombe (strain 972 / ATCC 24843) (Fission yeast), this protein is Meiotically up-regulated gene 52 protein (mug52).